We begin with the raw amino-acid sequence, 54 residues long: Large ribosomal subunit protein bL33 (54 aa).

This sequence belongs to the bacterial ribosomal protein bL33 family.

In Thermus thermophilus (strain ATCC BAA-163 / DSM 7039 / HB27), this protein is Large ribosomal subunit protein bL33.